We begin with the raw amino-acid sequence, 59 residues long: Cecropin-B2 (59 aa).

An N-terminal signal peptide occupies residues 1-23 (MNFNKLFLIVILAALLLLGQTEA). Leucine 57 bears the Leucine amide mark.

Belongs to the cecropin family.

The protein resides in the secreted. Functionally, cecropins have lytic and antibacterial activity against several Gram-positive and Gram-negative bacteria. The polypeptide is Cecropin-B2 (CECB2) (Culex pipiens pipiens (Northern house mosquito)).